A 358-amino-acid polypeptide reads, in one-letter code: Homoserine O-succinyltransferase (358 aa).

C146 functions as the Acyl-thioester intermediate in the catalytic mechanism. Substrate is bound by residues K167 and S196. H239 functions as the Proton acceptor in the catalytic mechanism. Residue E241 is part of the active site. R253 provides a ligand contact to substrate.

This sequence belongs to the MetA family.

The protein localises to the cytoplasm. The catalysed reaction is L-homoserine + succinyl-CoA = O-succinyl-L-homoserine + CoA. Its pathway is amino-acid biosynthesis; L-methionine biosynthesis via de novo pathway; O-succinyl-L-homoserine from L-homoserine: step 1/1. Its function is as follows. Transfers a succinyl group from succinyl-CoA to L-homoserine, forming succinyl-L-homoserine. This Nitrosococcus oceani (strain ATCC 19707 / BCRC 17464 / JCM 30415 / NCIMB 11848 / C-107) protein is Homoserine O-succinyltransferase.